Consider the following 362-residue polypeptide: 3-ketodihydrosphingosine reductase gsl-3 (362 aa).

Residue Leu-55 coordinates NADP(+). Residues Gly-58, Ser-60, Gly-62, and Arg-83 each coordinate NADPH. A GXSXG motif is present at residues Gly-58 to Gly-62. NADP(+) is bound at residue Asn-84. Residues Arg-87 and Asp-113 each contribute to the NADPH site. The NADP(+) site is built by Asp-113, Arg-176, Tyr-216, Lys-220, Ile-252, and Ser-254. Tyr-216 serves as the catalytic Proton acceptor. The Lowers pKa of active site Tyr role is filled by Lys-220. A helical membrane pass occupies residues Asn-318–Leu-338.

The protein belongs to the short-chain dehydrogenases/reductases (SDR) family.

The protein resides in the endoplasmic reticulum membrane. The catalysed reaction is sphinganine + NADP(+) = 3-oxosphinganine + NADPH + H(+). It functions in the pathway lipid metabolism; sphingolipid metabolism. Functionally, catalyzes the reduction of 3'-oxosphinganine (3-ketodihydrosphingosine/KDS) to sphinganine (dihydrosphingosine/DHS), the second step of de novo sphingolipid biosynthesis. The sequence is that of 3-ketodihydrosphingosine reductase gsl-3 (gsl-3) from Neurospora crassa (strain ATCC 24698 / 74-OR23-1A / CBS 708.71 / DSM 1257 / FGSC 987).